Consider the following 138-residue polypeptide: MAKPILRIGSRKNTRSGSRKNVRRIPKGVIHVQASFNNTIVTVTDVRGRVISWSSAGTCGFKGTRRGTPFAAQTAAGNAIRAVVDQGIQRAEVRIKGPGLGRDAALRAIRRSGILLSFVRDVTPMPHNGCRPPKKRRV.

The disordered stretch occupies residues 1–23 (MAKPILRIGSRKNTRSGSRKNVR). Residues 9–23 (GSRKNTRSGSRKNVR) show a composition bias toward basic residues.

The protein belongs to the universal ribosomal protein uS11 family. In terms of assembly, part of the 30S ribosomal subunit.

The protein resides in the plastid. Its subcellular location is the chloroplast. The sequence is that of Small ribosomal subunit protein uS11c from Aethionema grandiflorum (Persian stone-cress).